The following is a 657-amino-acid chain: Knob-associated histidine-rich protein (657 aa).

Residues 1–34 (MKSFKNKNTLRRKKAFPVFTKILLVSFLVWVLKC) form the signal peptide. Residue N42 is glycosylated (N-linked (GlcNAc...) asparagine). The segment covering 57 to 76 (AQKQHEHHHHHHHHHHHQHQ) has biased composition (basic residues). 3 disordered regions span residues 57–138 (AQKQ…PSNE), 282–301 (AHDG…SEGY), and 352–657 (VNKY…GCCG). Positions 99–108 (PQVHQQVHGQ) are enriched in low complexity. Positions 112 to 123 (HHHHHHHHHHLH) are enriched in basic residues. Composition is skewed to basic and acidic residues over residues 357-378 (KHGD…EGEK) and 399-408 (KDNEDAESVK). Basic residues predominate over residues 409-425 (SKKHKSHDCEKKKSKKH). Positions 426–435 (KDNEDAESVK) are enriched in basic and acidic residues. The span at 453–468 (AAKKLTKKIKIKKKTN) shows a compositional bias: basic residues. The segment covering 473-496 (DGSKAHEKKENETKNTAGENKKVD) has biased composition (basic and acidic residues). Polar residues predominate over residues 497–508 (STSADNKSTNAA). 2 stretches are compositionally biased toward basic and acidic residues: residues 512-523 (AKDKTQGGKTDK) and 551-578 (STSK…EATK). Over residues 590 to 614 (ASTTEGATKGASTTAGSTTGATTGA) the composition is skewed to low complexity. Positions 628–643 (AANNGEQVMSRGQAQL) are enriched in polar residues. Basic residues predominate over residues 648–657 (KKKKKRGCCG).

The protein resides in the secreted. Its function is as follows. KAHRP might mimick human histidine-rich glycoproteins to anchor host thrombospondin or a parasite analog in a binding complex with the endothelial cell receptor. The chain is Knob-associated histidine-rich protein (SD17) from Plasmodium falciparum (isolate NF7 / Ghana).